A 119-amino-acid chain; its full sequence is Large ribosomal subunit protein bL20 (119 aa).

The protein belongs to the bacterial ribosomal protein bL20 family.

Binds directly to 23S ribosomal RNA and is necessary for the in vitro assembly process of the 50S ribosomal subunit. It is not involved in the protein synthesizing functions of that subunit. This Clostridium kluyveri (strain NBRC 12016) protein is Large ribosomal subunit protein bL20.